The chain runs to 433 residues: ATP-dependent protease ATPase subunit HslU (433 aa).

ATP is bound by residues Val-18, 60–65 (GVGKTE), Asp-246, Glu-311, and Arg-383.

It belongs to the ClpX chaperone family. HslU subfamily. In terms of assembly, a double ring-shaped homohexamer of HslV is capped on each side by a ring-shaped HslU homohexamer. The assembly of the HslU/HslV complex is dependent on binding of ATP.

It localises to the cytoplasm. Functionally, ATPase subunit of a proteasome-like degradation complex; this subunit has chaperone activity. The binding of ATP and its subsequent hydrolysis by HslU are essential for unfolding of protein substrates subsequently hydrolyzed by HslV. HslU recognizes the N-terminal part of its protein substrates and unfolds these before they are guided to HslV for hydrolysis. The sequence is that of ATP-dependent protease ATPase subunit HslU from Nitrobacter winogradskyi (strain ATCC 25391 / DSM 10237 / CIP 104748 / NCIMB 11846 / Nb-255).